We begin with the raw amino-acid sequence, 947 residues long: Bifunctional glutamine synthetase adenylyltransferase/adenylyl-removing enzyme (947 aa).

Positions 1-440 are adenylyl removase; it reads MTPLSSPLSQ…VFNELIGDDE (440 aa). Residues 450-947 are adenylyl transferase; the sequence is SEPWREVWQD…ASWRKWLVAV (498 aa).

It belongs to the GlnE family. It depends on Mg(2+) as a cofactor.

The enzyme catalyses [glutamine synthetase]-O(4)-(5'-adenylyl)-L-tyrosine + phosphate = [glutamine synthetase]-L-tyrosine + ADP. The catalysed reaction is [glutamine synthetase]-L-tyrosine + ATP = [glutamine synthetase]-O(4)-(5'-adenylyl)-L-tyrosine + diphosphate. In terms of biological role, involved in the regulation of glutamine synthetase GlnA, a key enzyme in the process to assimilate ammonia. When cellular nitrogen levels are high, the C-terminal adenylyl transferase (AT) inactivates GlnA by covalent transfer of an adenylyl group from ATP to specific tyrosine residue of GlnA, thus reducing its activity. Conversely, when nitrogen levels are low, the N-terminal adenylyl removase (AR) activates GlnA by removing the adenylyl group by phosphorolysis, increasing its activity. The regulatory region of GlnE binds the signal transduction protein PII (GlnB) which indicates the nitrogen status of the cell. This is Bifunctional glutamine synthetase adenylyltransferase/adenylyl-removing enzyme from Salmonella paratyphi A (strain ATCC 9150 / SARB42).